The following is a 596-amino-acid chain: Aspartate--tRNA(Asp/Asn) ligase (596 aa).

L-aspartate is bound at residue Glu-175. An aspartate region spans residues 199-202 (QMFK). L-aspartate-binding residues include Arg-221 and His-451. ATP is bound at residue 221–223 (RDE). An ATP-binding site is contributed by Glu-485. Arg-492 lines the L-aspartate pocket. 537–540 (GVDR) is an ATP binding site.

It belongs to the class-II aminoacyl-tRNA synthetase family. Type 1 subfamily. In terms of assembly, homodimer.

The protein localises to the cytoplasm. The enzyme catalyses tRNA(Asx) + L-aspartate + ATP = L-aspartyl-tRNA(Asx) + AMP + diphosphate. Aspartyl-tRNA synthetase with relaxed tRNA specificity since it is able to aspartylate not only its cognate tRNA(Asp) but also tRNA(Asn). Reaction proceeds in two steps: L-aspartate is first activated by ATP to form Asp-AMP and then transferred to the acceptor end of tRNA(Asp/Asn). This is Aspartate--tRNA(Asp/Asn) ligase from Zymomonas mobilis subsp. mobilis (strain ATCC 31821 / ZM4 / CP4).